The following is a 357-amino-acid chain: Protein Wnt-8c (357 aa).

The signal sequence occupies residues 1-16 (MRGSTFLLLSIVGIYG). The cysteines at positions 55 and 66 are disulfide-linked. Asn104 carries an N-linked (GlcNAc...) asparagine glycan. Cystine bridges form between Cys105-Cys113, Cys115-Cys133, Cys181-Cys195, Cys183-Cys190, Cys260-Cys298, Cys276-Cys291, Cys313-Cys328, Cys315-Cys325, and Cys320-Cys321. A lipid anchor (O-palmitoleoyl serine) is attached at Ser187. Asn263 and Asn282 each carry an N-linked (GlcNAc...) asparagine glycan. N-linked (GlcNAc...) asparagine glycosylation is present at Asn346.

This sequence belongs to the Wnt family. Palmitoleoylation is required for efficient binding to frizzled receptors. Depalmitoleoylation leads to Wnt signaling pathway inhibition. Post-translationally, proteolytic processing by tiki1 and tiki2 promotes oxidation and formation of large disulfide-bond oligomers, leading to inactivation of wnt8c. In terms of tissue distribution, cells that form rhombomere 4. Hensen node and the neural plate immediately anterior to it.

The protein resides in the secreted. Its subcellular location is the extracellular space. The protein localises to the extracellular matrix. Functionally, ligand for members of the frizzled family of seven transmembrane receptors. Probable developmental protein. Is likely to signal over only few cell diameters. May be involved in the regulation of axis formation and in the rhombomere specification. In Gallus gallus (Chicken), this protein is Protein Wnt-8c (WNT8C).